We begin with the raw amino-acid sequence, 150 residues long: Large ribosomal subunit protein bL9 (150 aa).

The protein belongs to the bacterial ribosomal protein bL9 family.

Binds to the 23S rRNA. The polypeptide is Large ribosomal subunit protein bL9 (Mycoplasma genitalium (strain ATCC 33530 / DSM 19775 / NCTC 10195 / G37) (Mycoplasmoides genitalium)).